The chain runs to 478 residues: ATP synthase subunit beta (478 aa).

164 to 171 lines the ATP pocket; sequence GGAGVGKT.

The protein belongs to the ATPase alpha/beta chains family. As to quaternary structure, F-type ATPases have 2 components, CF(1) - the catalytic core - and CF(0) - the membrane proton channel. CF(1) has five subunits: alpha(3), beta(3), gamma(1), delta(1), epsilon(1). CF(0) has three main subunits: a(1), b(2) and c(9-12). The alpha and beta chains form an alternating ring which encloses part of the gamma chain. CF(1) is attached to CF(0) by a central stalk formed by the gamma and epsilon chains, while a peripheral stalk is formed by the delta and b chains.

The protein localises to the cell membrane. The enzyme catalyses ATP + H2O + 4 H(+)(in) = ADP + phosphate + 5 H(+)(out). Its function is as follows. Produces ATP from ADP in the presence of a proton gradient across the membrane. The catalytic sites are hosted primarily by the beta subunits. This Streptomyces avermitilis (strain ATCC 31267 / DSM 46492 / JCM 5070 / NBRC 14893 / NCIMB 12804 / NRRL 8165 / MA-4680) protein is ATP synthase subunit beta.